We begin with the raw amino-acid sequence, 1357 residues long: Vascular endothelial growth factor receptor 2 (1357 aa).

Positions 1–22 (MAKTSYALLLLDILLTFNVAKA) are cleaved as a signal peptide. Over 23–774 (IELRFVPDPP…GAEEKMNVEL (752 aa)) the chain is Extracellular. Ig-like C2-type domains are found at residues 32–120 (PTLN…SVAV), 120–222 (VYVF…VAVV), 216–330 (PYIV…ASLI), 335–426 (PFIA…RTFQ), 433–553 (PRIF…VIVF), 556–667 (TRFL…LLHN), and 676–762 (SRIV…ARIS). N-linked (GlcNAc...) asparagine glycans are attached at residues Asn-35, Asn-44, Asn-66, Asn-97, Asn-161, Asn-209, Asn-247, Asn-272, Asn-303, Asn-307, Asn-407, Asn-501, Asn-560, Asn-621, Asn-631, Asn-640, Asn-681, Asn-688, and Asn-713. 2 disulfide bridges follow: Cys-53-Cys-104 and Cys-153-Cys-203. Cys-248 and Cys-314 form a disulfide bridge. A disulfide bridge connects residues Cys-457 and Cys-538. Cys-579 and Cys-651 form a disulfide bridge. A disulfide bond links Cys-697 and Cys-746. Residues 775–795 (IMPIGAVVIAMFLWLLIVFVI) traverse the membrane as a helical segment. Residues 796-1357 (RNRKRPNDGD…AEVRYSAPPV (562 aa)) are Cytoplasmic-facing. One can recognise a Protein kinase domain in the interval 843–1173 (LKLGEPLGRG…FTQLVEHLGN (331 aa)). Residues 849–857 (LGRGAFGQV) and Lys-877 each bind ATP. The disordered stretch occupies residues 944–975 (YSPYKKRTPRMPNRREVQQDEDPREGDLGLGT). The active-site Proton acceptor is Asp-1039. Residues Tyr-1065, Tyr-1070, Tyr-1186, and Tyr-1222 each carry the phosphotyrosine; by autocatalysis modification. The segment at 1296–1357 (SLASESSNQT…AEVRYSAPPV (62 aa)) is disordered. A compositionally biased stretch (polar residues) spans 1298 to 1312 (ASESSNQTSGYQSGY).

Belongs to the protein kinase superfamily. Tyr protein kinase family. CSF-1/PDGF receptor subfamily. In terms of assembly, interacts with isoform VEGF165 of vegfaa and, to a lesser extent, with isoform VEGF171 of vegfab. Interacts (via juxtamembrane region) with chaperone pdcl3 (via thioredoxin fold region); the interaction leads to increased vegfr2 abundance through inhibition of its ubiquitination and degradation. First expressed in embryos between 5- and 7-somites in the bilateral stripes that contain the developing angioblasts, and then localized to the intermediate cell mass (ICM) and the developing vasculature. By 30 hpf, expressed in the major trunk, head and intersomitic vessels, persisting through 4 dpf when expression is seen in developing subintestinal veins and in the remaining vasculature.

It is found in the cell membrane. It localises to the cytoplasm. Its subcellular location is the nucleus. The protein resides in the cytoplasmic vesicle. The protein localises to the early endosome. It is found in the cell junction. It localises to the endoplasmic reticulum. It carries out the reaction L-tyrosyl-[protein] + ATP = O-phospho-L-tyrosyl-[protein] + ADP + H(+). Its function is as follows. Receptor for VEGF or VEGFC. Has a tyrosine-protein kinase activity. Combinations of multiple VEGF receptors are required for development of different blood vessel types in the embryo. Involved in angiogenesis, specifically in VEGF-induced sprouting of new blood vessels. Particularly involved in artery formation. Does not appear to be required for hematopoiesis. The polypeptide is Vascular endothelial growth factor receptor 2 (Danio rerio (Zebrafish)).